The following is a 245-amino-acid chain: Ribonuclease PH (245 aa).

Residues Arg-86 and 124–126 (GTR) contribute to the phosphate site.

Belongs to the RNase PH family. As to quaternary structure, homohexameric ring arranged as a trimer of dimers.

It carries out the reaction tRNA(n+1) + phosphate = tRNA(n) + a ribonucleoside 5'-diphosphate. Its function is as follows. Phosphorolytic 3'-5' exoribonuclease that plays an important role in tRNA 3'-end maturation. Removes nucleotide residues following the 3'-CCA terminus of tRNAs; can also add nucleotides to the ends of RNA molecules by using nucleoside diphosphates as substrates, but this may not be physiologically important. Probably plays a role in initiation of 16S rRNA degradation (leading to ribosome degradation) during starvation. This Bacillus velezensis (strain DSM 23117 / BGSC 10A6 / LMG 26770 / FZB42) (Bacillus amyloliquefaciens subsp. plantarum) protein is Ribonuclease PH.